A 312-amino-acid polypeptide reads, in one-letter code: D-alanine--D-alanine ligase (312 aa).

The ATP-grasp domain occupies 108–308 (KLVWQQTGIP…YSELVVKVLS (201 aa)). 138 to 193 (AAKLGVPLFVKPASEGSSVAVEKVKSADALPAALEEAAKHDKIVIVEKSIEGGGEY) contacts ATP. The Mg(2+) site is built by aspartate 262, glutamate 275, and asparagine 277.

Belongs to the D-alanine--D-alanine ligase family. It depends on Mg(2+) as a cofactor. Mn(2+) serves as cofactor.

It localises to the cytoplasm. The catalysed reaction is 2 D-alanine + ATP = D-alanyl-D-alanine + ADP + phosphate + H(+). The protein operates within cell wall biogenesis; peptidoglycan biosynthesis. In terms of biological role, cell wall formation. This chain is D-alanine--D-alanine ligase, found in Burkholderia pseudomallei (strain 668).